The chain runs to 413 residues: Probable tRNA pseudouridine synthase D (413 aa).

D97 acts as the Nucleophile in catalysis. The 204-residue stretch at 167–370 (AVPNYYGYQR…YGSYRRARLE (204 aa)) folds into the TRUD domain.

It belongs to the pseudouridine synthase TruD family.

It carries out the reaction uridine(13) in tRNA = pseudouridine(13) in tRNA. Functionally, could be responsible for synthesis of pseudouridine from uracil-13 in transfer RNAs. The protein is Probable tRNA pseudouridine synthase D of Pyrobaculum arsenaticum (strain DSM 13514 / JCM 11321 / PZ6).